A 116-amino-acid chain; its full sequence is Large ribosomal subunit protein bL20 (116 aa).

It belongs to the bacterial ribosomal protein bL20 family.

Functionally, binds directly to 23S ribosomal RNA and is necessary for the in vitro assembly process of the 50S ribosomal subunit. It is not involved in the protein synthesizing functions of that subunit. In Mycoplasmopsis synoviae (strain 53) (Mycoplasma synoviae), this protein is Large ribosomal subunit protein bL20.